The sequence spans 456 residues: Putative E3 ubiquitin-protein ligase XBAT31 (456 aa).

ANK repeat units follow at residues 45 to 74 (DRHSVLHVAAANGQIEILSLLLERFTNPDL), 78 to 107 (HKQTPLMLAAMYGRISCVKKLAEVGANILM), 112 to 141 (NRRTCLHYAAYYGHANCVQAILSAAQSSPV), 157 to 186 (KGATPLHLAARQRRPECVNVLLDSGSLVCA), and 194 to 224 (PGSTPLHLAARSGSIDCVRKLLAWGADRLQR). The segment at 319-368 (CCICFEQVCTIEVKDCGHQMCAQCTLALCCHNKPNPTTSTVTPPVCPFCR) adopts an RING-type zinc-finger fold.

It catalyses the reaction S-ubiquitinyl-[E2 ubiquitin-conjugating enzyme]-L-cysteine + [acceptor protein]-L-lysine = [E2 ubiquitin-conjugating enzyme]-L-cysteine + N(6)-ubiquitinyl-[acceptor protein]-L-lysine.. The protein operates within protein modification; protein ubiquitination. No E3 ubiquitin-protein ligase activity observed when associated with the E2 enzyme UBC8 in vitro. The sequence is that of Putative E3 ubiquitin-protein ligase XBAT31 (XBAT31) from Arabidopsis thaliana (Mouse-ear cress).